The primary structure comprises 573 residues: Oxygen sensor histidine kinase response regulator DosT (573 aa).

GAF domains follow at residues 61-198 and 229-366; these read KLDA…GIAV and DPAM…ALAW. Position 147 (His-147) interacts with heme. The Histidine kinase domain occupies 380–573; sequence ILTDRDRIAR…TLLRWSAPLR (194 aa). His-392 is modified (phosphohistidine; by autocatalysis).

Requires Mg(2+) as cofactor. Heme serves as cofactor.

It is found in the cytoplasm. Its function is as follows. Interacts with the two-component regulatory system DevR/DevS (DosR/DosS) involved in onset of the dormancy response. Required for full induction of the DevR (DosR) regulon; required during early adaptation to anaerobiosis, to start induction of the DevR regulon. May act as a direct hypoxia/oxygen sensor. May be the secondary sensor for CO. Donates a phosphate group to DevR (DosR). The polypeptide is Oxygen sensor histidine kinase response regulator DosT (dosT) (Mycobacterium tuberculosis (strain CDC 1551 / Oshkosh)).